The primary structure comprises 188 residues: Ribosome-recycling factor (188 aa).

Belongs to the RRF family.

Its subcellular location is the cytoplasm. Responsible for the release of ribosomes from messenger RNA at the termination of protein biosynthesis. May increase the efficiency of translation by recycling ribosomes from one round of translation to another. The sequence is that of Ribosome-recycling factor from Akkermansia muciniphila (strain ATCC BAA-835 / DSM 22959 / JCM 33894 / BCRC 81048 / CCUG 64013 / CIP 107961 / Muc).